The primary structure comprises 185 residues: Ribosome-recycling factor (185 aa).

The protein belongs to the RRF family.

It localises to the cytoplasm. Its function is as follows. Responsible for the release of ribosomes from messenger RNA at the termination of protein biosynthesis. May increase the efficiency of translation by recycling ribosomes from one round of translation to another. The chain is Ribosome-recycling factor from Pseudomonas putida (strain ATCC 700007 / DSM 6899 / JCM 31910 / BCRC 17059 / LMG 24140 / F1).